A 325-amino-acid polypeptide reads, in one-letter code: Serine/threonine-protein kinase CtkA (325 aa).

ATP is bound by residues 21 to 24, K37, Q72, and 88 to 90; these read NGNK and KDF. Residues N160 and D179 each coordinate Mg(2+). ATP is bound at residue D179. Residues 296-325 are disordered; that stretch reads QHKQAHSNPYDNADDLDNSNEYTPTPKRRR.

Autophosphorylates on either Thr-3 or Thr-7.

It localises to the secreted. The protein localises to the host cytoplasm. The protein resides in the host cytosol. Its subcellular location is the host nucleus. The enzyme catalyses L-seryl-[protein] + ATP = O-phospho-L-seryl-[protein] + ADP + H(+). The catalysed reaction is L-threonyl-[protein] + ATP = O-phospho-L-threonyl-[protein] + ADP + H(+). Functionally, virulence factor acting as a pro-inflammatory protein that induces the secretion of the pro-inflammatory cytokines TNF-alpha (tumor necrosis factor-alpha) and IL-8 (interleukin-8) from human macrophages, as well as enhanced translocation of the transcription factor NF-kappa-B complex in macrophages. Is a kinase capable of autophosphorylating itself at a threonine residue near the N-terminus. Also leads to enhanced phosphorylation of the NF-kappa-B p65 subunit (RELA) at 'Ser-276' in human epithelial cancer cells; its kinase activity is required for this enhanced phosphorylation that up-regulates NF-kappa-B activity, but it does not directly phosphorylate this protein. Thus, the kinase activity of CtkA may play an important role in the induction of host inflammatory responses during H.pylori infection. This chain is Serine/threonine-protein kinase CtkA (ctkA), found in Helicobacter pylori (strain J99 / ATCC 700824) (Campylobacter pylori J99).